Reading from the N-terminus, the 74-residue chain is Conotoxin SIIID (74 aa).

An N-terminal signal peptide occupies residues 1-20 (MMSKLGVLLTVCLLLFPLTA). Positions 21 to 53 (LPLDGDQPADQLEDRMQDDISSEQYPSFVRRQK) are excised as a propeptide. Disulfide bonds link Cys54-Cys71, Cys55-Cys73, and Cys61-Cys74.

This sequence belongs to the conotoxin M superfamily. In terms of processing, three disulfide isomers have been synthesized and tested. SIIID with the disulfide pairing 1-4;2-5;3-6 is the most active. Expressed by the venom duct.

The protein localises to the secreted. Functionally, the short synthetic peptide SIIID (range 54-74, with disulfide pairing 1-4, 2-5 and 3-6) reversibly inhibits human alpha-7/CHRNA7 acetylcholine receptor (IC(50)=880 nM). Shows a paralytic effect in fish. In Conus striatus (Striated cone), this protein is Conotoxin SIIID.